Reading from the N-terminus, the 456-residue chain is Glycosyl hydrolase family 109 protein 2 (456 aa).

The segment at residues 1–33 (MSGFDRRSFLKASMVTAAATALAACASSERATG) is a signal peptide (tat-type signal). Residues 63-64 (ER), aspartate 85, 134-137 (WAWH), 154-155 (EV), and asparagine 183 contribute to the NAD(+) site. Substrate contacts are provided by residues tyrosine 212, arginine 231, 243 to 246 (YPTH), and tyrosine 325. Tyrosine 243 contacts NAD(+).

The protein belongs to the Gfo/Idh/MocA family. Glycosyl hydrolase 109 subfamily. The cofactor is NAD(+). Post-translationally, predicted to be exported by the Tat system. The position of the signal peptide cleavage has not been experimentally proven.

Functionally, glycosidase. This is Glycosyl hydrolase family 109 protein 2 from Shewanella sp. (strain ANA-3).